The chain runs to 667 residues: UvrABC system protein B (667 aa).

In terms of domain architecture, Helicase ATP-binding spans 25–414 (TGLQRGDKHQ…GVVVEQIIRP (390 aa)). 38-45 (GVTGSGKT) provides a ligand contact to ATP. The Beta-hairpin signature appears at 91–114 (YYDYYQPEAYVPTTDTFIEKDSSI). The Helicase C-terminal domain occupies 430-596 (QVDDLIHEIR…TVKKSLRSIL (167 aa)). In terms of domain architecture, UVR spans 624–659 (KNEIARVKEEMLAAAANLEFEKAAELRDRMLELDKL).

Belongs to the UvrB family. As to quaternary structure, forms a heterotetramer with UvrA during the search for lesions. Interacts with UvrC in an incision complex.

It localises to the cytoplasm. The UvrABC repair system catalyzes the recognition and processing of DNA lesions. A damage recognition complex composed of 2 UvrA and 2 UvrB subunits scans DNA for abnormalities. Upon binding of the UvrA(2)B(2) complex to a putative damaged site, the DNA wraps around one UvrB monomer. DNA wrap is dependent on ATP binding by UvrB and probably causes local melting of the DNA helix, facilitating insertion of UvrB beta-hairpin between the DNA strands. Then UvrB probes one DNA strand for the presence of a lesion. If a lesion is found the UvrA subunits dissociate and the UvrB-DNA preincision complex is formed. This complex is subsequently bound by UvrC and the second UvrB is released. If no lesion is found, the DNA wraps around the other UvrB subunit that will check the other stand for damage. In Syntrophotalea carbinolica (strain DSM 2380 / NBRC 103641 / GraBd1) (Pelobacter carbinolicus), this protein is UvrABC system protein B.